The following is a 338-amino-acid chain: UDP-3-O-acylglucosamine N-acyltransferase (338 aa).

The Proton acceptor role is filled by His251.

The protein belongs to the transferase hexapeptide repeat family. LpxD subfamily. In terms of assembly, homotrimer.

The enzyme catalyses a UDP-3-O-[(3R)-3-hydroxyacyl]-alpha-D-glucosamine + a (3R)-hydroxyacyl-[ACP] = a UDP-2-N,3-O-bis[(3R)-3-hydroxyacyl]-alpha-D-glucosamine + holo-[ACP] + H(+). Its pathway is bacterial outer membrane biogenesis; LPS lipid A biosynthesis. In terms of biological role, catalyzes the N-acylation of UDP-3-O-acylglucosamine using 3-hydroxyacyl-ACP as the acyl donor. Is involved in the biosynthesis of lipid A, a phosphorylated glycolipid that anchors the lipopolysaccharide to the outer membrane of the cell. The chain is UDP-3-O-acylglucosamine N-acyltransferase from Psychrobacter arcticus (strain DSM 17307 / VKM B-2377 / 273-4).